The chain runs to 160 residues: Transcription elongation factor GreA (160 aa).

The stretch at 12-76 (EGVKKLEEEL…QLENMLKNAS (65 aa)) forms a coiled coil.

The protein belongs to the GreA/GreB family.

Functionally, necessary for efficient RNA polymerase transcription elongation past template-encoded arresting sites. The arresting sites in DNA have the property of trapping a certain fraction of elongating RNA polymerases that pass through, resulting in locked ternary complexes. Cleavage of the nascent transcript by cleavage factors such as GreA or GreB allows the resumption of elongation from the new 3'terminus. GreA releases sequences of 2 to 3 nucleotides. In Clostridium botulinum (strain Hall / ATCC 3502 / NCTC 13319 / Type A), this protein is Transcription elongation factor GreA.